Here is a 260-residue protein sequence, read N- to C-terminus: Snake venom serine protease gussurobin (260 aa).

An N-terminal signal peptide occupies residues 1 to 18; the sequence is MVLIRVLANLLILQLSYA. A propeptide spanning residues 19–24 is cleaved from the precursor; it reads QKSSEL. Positions 25-251 constitute a Peptidase S1 domain; that stretch reads IIGGDECNIN…YTEWIQSTIA (227 aa). Disulfide bonds link C31–C165, C52–C68, C100–C258, C144–C212, C176–C191, and C202–C227. Active-site charge relay system residues include H67 and D112. 2 N-linked (GlcNAc...) asparagine glycosylation sites follow: N123 and N124. The active-site Charge relay system is the S206.

Belongs to the peptidase S1 family. Snake venom subfamily. Monomer. As to expression, expressed by the venom gland.

The protein resides in the secreted. Functionally, snake venom serine protease that may act in the hemostasis system of the prey. This is Snake venom serine protease gussurobin from Gloydius ussuriensis (Ussuri mamushi).